Consider the following 249-residue polypeptide: 5'-nucleotidase SurE (249 aa).

The a divalent metal cation site is built by D8, D9, S39, and N91.

The protein belongs to the SurE nucleotidase family. It depends on a divalent metal cation as a cofactor.

It localises to the cytoplasm. The enzyme catalyses a ribonucleoside 5'-phosphate + H2O = a ribonucleoside + phosphate. Nucleotidase that shows phosphatase activity on nucleoside 5'-monophosphates. The chain is 5'-nucleotidase SurE from Magnetococcus marinus (strain ATCC BAA-1437 / JCM 17883 / MC-1).